The sequence spans 617 residues: MKQSKMPIPTLREMPSDAQVISHALMLRAGYVRQVSAGVYSYLPLANRVIEKAKNIMRQEFEKIGAVEMLAPALLSAELWRESGRYETYGEDLYKLKNREKSDFILGPTHEETFTAIVRDSVKSYKQLPLNLYQIQPKYRDEKRPRNGLLRTREFIMKDAYSFHANYDSLDSVYDEYKAAYERIFTRSGLDFKAIIGDGGAMGGKDSQEFMAITSARTDLDRWVVLDKSVVSFDEIPVEVQEEIKAELLKWIVSGEDTIAYSSESSYAANLEMATNEYKPSNRVVAEEEVTRVATPDVKSIDEVAAFLNVPEEQTIKTLFYIADGELVAALLVGNDQLNEVKLKNHLGADFFDVASEEEVANVVQAGFGSLGPVGLPENIKIIADRKVQDVRNAVVGANEDGYHLTGVNPGRDFTAEYVDIREVREGEISPDGQGVLNFARGIEIGHIFKLGTRYSASMGADVLDENGRAVPIIMGCYGIGVSRLLSAVMEQHARLFVNKTPKGEYRYAWGINFPKELAPFDVHLITVNVKDEEAQALTEKLEASLMGAGYEVLTDDRNERVGVKFSDSDLIGLPIRITVGKKAADGIVEVKIKATGDTIEVHADNVLETLEILSKK.

This sequence belongs to the class-II aminoacyl-tRNA synthetase family. ProS type 1 subfamily. As to quaternary structure, homodimer.

It localises to the cytoplasm. It catalyses the reaction tRNA(Pro) + L-proline + ATP = L-prolyl-tRNA(Pro) + AMP + diphosphate. Catalyzes the attachment of proline to tRNA(Pro) in a two-step reaction: proline is first activated by ATP to form Pro-AMP and then transferred to the acceptor end of tRNA(Pro). As ProRS can inadvertently accommodate and process non-cognate amino acids such as alanine and cysteine, to avoid such errors it has two additional distinct editing activities against alanine. One activity is designated as 'pretransfer' editing and involves the tRNA(Pro)-independent hydrolysis of activated Ala-AMP. The other activity is designated 'posttransfer' editing and involves deacylation of mischarged Ala-tRNA(Pro). The misacylated Cys-tRNA(Pro) is not edited by ProRS. The sequence is that of Proline--tRNA ligase from Streptococcus pneumoniae (strain ATCC BAA-255 / R6).